Here is a 243-residue protein sequence, read N- to C-terminus: Cell division protein ZipA (243 aa).

Residues 1 to 4 lie on the Periplasmic side of the membrane; the sequence is MSDM. Residues 5–25 traverse the membrane as a helical segment; it reads AMIRIGILIAGLLLVAAIFLF. At 26–243 the chain is on the cytoplasmic side; it reads GRPKKSPQGR…APPLTKSPRW (218 aa). Positions 30–89 are disordered; that stretch reads KSPQGRRVDKDEGQPRERREPVISSEFGVEDDAAERAEGVEQSELNLEGQDASGGNEVGK. Over residues 35–50 the composition is skewed to basic and acidic residues; the sequence is RRVDKDEGQPRERREP.

It belongs to the ZipA family. Interacts with FtsZ via their C-terminal domains.

It is found in the cell inner membrane. Functionally, essential cell division protein that stabilizes the FtsZ protofilaments by cross-linking them and that serves as a cytoplasmic membrane anchor for the Z ring. Also required for the recruitment to the septal ring of downstream cell division proteins. The chain is Cell division protein ZipA from Xanthomonas euvesicatoria pv. vesicatoria (strain 85-10) (Xanthomonas campestris pv. vesicatoria).